A 389-amino-acid chain; its full sequence is MTAPSLSLRHAAPYSTVNSLGFPKPPAQTRVVVAMSGGVDSSVVAAMLAAQGYDVIGVTLQLYDHGAALAKKGACCAGQDIHDARRVAERIGFPHYVLDYENKFRESVIEEFADAYLAGATPVPCIRCNERVKFRDLLQTARELDADCMATGHYIRRLMGPKGAELHMAADPARDQSYFLFSTTQEQLDFLRFPLGGLASKAETRALAAQYGLAVADKPDSQDICFVPNGDYASVIEKLRPGAADPGEIVDMDGNVLGSHRGVIHYTIGQRRGLGIGGLGDPLYVVRLEPDTRRVVVGPKQALATKIVPVTEVNWLGDEPFEDEIAVTARIRSTRPPRPAILRVTGKHRAEIELLDPEEGVSPGQACVFYATEGSRVLGGGWISHRRGG.

ATP contacts are provided by residues 34–41 (AMSGGVDS) and Leu-60. The Nucleophile role is filled by Cys-128. Residues Cys-128 and Cys-225 are joined by a disulfide bond. Residue Gly-152 coordinates ATP. Positions 174–176 (RDQ) are interaction with tRNA. The active-site Cysteine persulfide intermediate is Cys-225.

This sequence belongs to the MnmA/TRMU family.

The protein localises to the cytoplasm. The enzyme catalyses S-sulfanyl-L-cysteinyl-[protein] + uridine(34) in tRNA + AH2 + ATP = 2-thiouridine(34) in tRNA + L-cysteinyl-[protein] + A + AMP + diphosphate + H(+). Its function is as follows. Catalyzes the 2-thiolation of uridine at the wobble position (U34) of tRNA, leading to the formation of s(2)U34. This chain is tRNA-specific 2-thiouridylase MnmA, found in Paracoccus denitrificans (strain Pd 1222).